We begin with the raw amino-acid sequence, 300 residues long: Ribosomal protein L11 methyltransferase (300 aa).

Residues Thr-147, Gly-168, Asp-190, and Asn-236 each coordinate S-adenosyl-L-methionine.

This sequence belongs to the methyltransferase superfamily. PrmA family.

The protein resides in the cytoplasm. The enzyme catalyses L-lysyl-[protein] + 3 S-adenosyl-L-methionine = N(6),N(6),N(6)-trimethyl-L-lysyl-[protein] + 3 S-adenosyl-L-homocysteine + 3 H(+). In terms of biological role, methylates ribosomal protein L11. The polypeptide is Ribosomal protein L11 methyltransferase (Leptospira interrogans serogroup Icterohaemorrhagiae serovar Lai (strain 56601)).